A 166-amino-acid chain; its full sequence is Regulatory protein RecX (166 aa).

The protein belongs to the RecX family.

Its subcellular location is the cytoplasm. In terms of biological role, modulates RecA activity. This is Regulatory protein RecX from Salmonella agona (strain SL483).